A 199-amino-acid polypeptide reads, in one-letter code: Transgelin-2 (199 aa).

Alanine 2 carries the N-acetylalanine modification. Serine 11 carries the post-translational modification Phosphoserine. Lysine 17 and lysine 20 each carry N6-acetyllysine. Residues 24–136 (ADLEQILIQW…RTLMNLGGLA (113 aa)) enclose the Calponin-homology (CH) domain. Position 163 is a phosphoserine (serine 163). Residue lysine 171 forms a Glycyl lysine isopeptide (Lys-Gly) (interchain with G-Cter in SUMO2) linkage. The Calponin-like repeat unit spans residues 174–199 (IGLQMGTNRGASQAGMTGYGMPRQIL). Position 180 is a phosphothreonine (threonine 180). Omega-N-methylarginine is present on residues arginine 182 and arginine 196.

It belongs to the calponin family.

This is Transgelin-2 (Tagln2) from Mus musculus (Mouse).